Consider the following 97-residue polypeptide: MSRKCELTGVGVLYGNNVSHSQRKTRRRFKPNLRSVKFTSDITAGEYRLSVNARCISSVEKAGGFDAYILKADDNVLSSNARAIKKKIIQTKTAKSL.

Belongs to the bacterial ribosomal protein bL28 family.

In Rickettsia peacockii (strain Rustic), this protein is Large ribosomal subunit protein bL28.